The sequence spans 254 residues: Allene oxide cyclase 4, chloroplastic (254 aa).

A chloroplast-targeting transit peptide spans M1–R52.

Belongs to the allene oxide cyclase family. In terms of tissue distribution, highly expressed in fully developed leaves.

It is found in the plastid. The protein resides in the chloroplast. It carries out the reaction (9Z,13S,15Z)-12,13-epoxyoctadeca-9,11,15-trienoate = (9S,13S,15Z)-12-oxophyto-10,15-dienoate. Involved in the production of 12-oxo-phytodienoic acid (OPDA), a precursor of jasmonic acid. The sequence is that of Allene oxide cyclase 4, chloroplastic (AOC4) from Arabidopsis thaliana (Mouse-ear cress).